The chain runs to 283 residues: Shikimate kinase (283 aa).

86 to 96 (PIKSGLSSSSA) provides a ligand contact to ATP.

The protein belongs to the GHMP kinase family. Archaeal shikimate kinase subfamily.

The protein localises to the cytoplasm. It carries out the reaction shikimate + ATP = 3-phosphoshikimate + ADP + H(+). Its pathway is metabolic intermediate biosynthesis; chorismate biosynthesis; chorismate from D-erythrose 4-phosphate and phosphoenolpyruvate: step 5/7. The sequence is that of Shikimate kinase from Methanococcus maripaludis (strain C6 / ATCC BAA-1332).